We begin with the raw amino-acid sequence, 283 residues long: Cytosolic Fe-S cluster assembly factor CFD1 (283 aa).

An ATP-binding site is contributed by 26–33; it reads GKGGVGKS. Cys-202 and Cys-205 together coordinate [4Fe-4S] cluster.

This sequence belongs to the Mrp/NBP35 ATP-binding proteins family. NUBP2/CFD1 subfamily. As to quaternary structure, heterotetramer of 2 NBP35 and 2 CFD1 chains. The cofactor is [4Fe-4S] cluster.

The protein localises to the cytoplasm. Its function is as follows. Component of the cytosolic iron-sulfur (Fe/S) protein assembly (CIA) machinery. Required for maturation of extramitochondrial Fe-S proteins. The NBP35-CFD1 heterotetramer forms a Fe-S scaffold complex, mediating the de novo assembly of an Fe-S cluster and its transfer to target apoproteins. Required for biogenesis and export of both ribosomal subunits, which may reflect a role in assembly of the Fe/S clusters in RLI1, a protein which performs rRNA processing and ribosome export. In Kluyveromyces lactis (strain ATCC 8585 / CBS 2359 / DSM 70799 / NBRC 1267 / NRRL Y-1140 / WM37) (Yeast), this protein is Cytosolic Fe-S cluster assembly factor CFD1.